The sequence spans 150 residues: Large ribosomal subunit protein uL15 (150 aa).

A disordered region spans residues 1–55 (MADNEILQMHDLKPAPGAKKDRTRVGRGEGSKGKTAGRGAKGQTKRNHVRPGFEG). Residues 8–32 (QMHDLKPAPGAKKDRTRVGRGEGSK) are compositionally biased toward basic and acidic residues.

It belongs to the universal ribosomal protein uL15 family. As to quaternary structure, part of the 50S ribosomal subunit.

Its function is as follows. Binds to the 23S rRNA. The polypeptide is Large ribosomal subunit protein uL15 (Bifidobacterium longum (strain DJO10A)).